An 875-amino-acid chain; its full sequence is Alanine--tRNA ligase (875 aa).

Residues H564, H568, C666, and H670 each coordinate Zn(2+).

Belongs to the class-II aminoacyl-tRNA synthetase family. Homotetramer. Zn(2+) serves as cofactor.

The protein resides in the cytoplasm. It carries out the reaction tRNA(Ala) + L-alanine + ATP = L-alanyl-tRNA(Ala) + AMP + diphosphate. Catalyzes the attachment of alanine to tRNA(Ala) in a two-step reaction: alanine is first activated by ATP to form Ala-AMP and then transferred to the acceptor end of tRNA(Ala). Also edits incorrectly charged Ser-tRNA(Ala) and Gly-tRNA(Ala) via its editing domain. This Pectobacterium atrosepticum (strain SCRI 1043 / ATCC BAA-672) (Erwinia carotovora subsp. atroseptica) protein is Alanine--tRNA ligase.